The sequence spans 258 residues: UPF0246 protein Shew_1093 (258 aa).

The protein belongs to the UPF0246 family.

In Shewanella loihica (strain ATCC BAA-1088 / PV-4), this protein is UPF0246 protein Shew_1093.